Reading from the N-terminus, the 740-residue chain is Phosphoribosylformylglycinamidine synthase subunit PurL (740 aa).

Histidine 50 is a catalytic residue. ATP-binding residues include tyrosine 53 and lysine 92. Glutamate 94 serves as a coordination point for Mg(2+). Residues 95–98 and arginine 117 contribute to the substrate site; that span reads SHNH. Histidine 96 (proton acceptor) is an active-site residue. Aspartate 118 lines the Mg(2+) pocket. Glutamine 241 lines the substrate pocket. Mg(2+) is bound at residue aspartate 269. Substrate is bound at residue 313–315; sequence ESQ. ATP-binding residues include aspartate 495 and glycine 532. Asparagine 533 contributes to the Mg(2+) binding site. Serine 535 serves as a coordination point for substrate.

The protein belongs to the FGAMS family. In terms of assembly, monomer. Part of the FGAM synthase complex composed of 1 PurL, 1 PurQ and 2 PurS subunits.

The protein localises to the cytoplasm. It catalyses the reaction N(2)-formyl-N(1)-(5-phospho-beta-D-ribosyl)glycinamide + L-glutamine + ATP + H2O = 2-formamido-N(1)-(5-O-phospho-beta-D-ribosyl)acetamidine + L-glutamate + ADP + phosphate + H(+). Its pathway is purine metabolism; IMP biosynthesis via de novo pathway; 5-amino-1-(5-phospho-D-ribosyl)imidazole from N(2)-formyl-N(1)-(5-phospho-D-ribosyl)glycinamide: step 1/2. Functionally, part of the phosphoribosylformylglycinamidine synthase complex involved in the purines biosynthetic pathway. Catalyzes the ATP-dependent conversion of formylglycinamide ribonucleotide (FGAR) and glutamine to yield formylglycinamidine ribonucleotide (FGAM) and glutamate. The FGAM synthase complex is composed of three subunits. PurQ produces an ammonia molecule by converting glutamine to glutamate. PurL transfers the ammonia molecule to FGAR to form FGAM in an ATP-dependent manner. PurS interacts with PurQ and PurL and is thought to assist in the transfer of the ammonia molecule from PurQ to PurL. The polypeptide is Phosphoribosylformylglycinamidine synthase subunit PurL (Brucella abortus (strain S19)).